Reading from the N-terminus, the 542-residue chain is Cytochrome P450 monooxygenase sdnH (542 aa).

The helical transmembrane segment at 25–45 threads the bilayer; that stretch reads LYVAGGILGAFTVYSIILVVY. The segment at 141 to 160 is disordered; it reads IIPPRGLGQEDSIGSTRSHD. The helical transmembrane segment at 340 to 360 threads the bilayer; the sequence is FMGAGTYPTAATLIFVAYYIL. C483 contacts heme. A glycan (N-linked (GlcNAc...) asparagine) is linked at N506.

It belongs to the cytochrome P450 family. The cofactor is heme.

It is found in the membrane. Its pathway is antibiotic biosynthesis. Its function is as follows. Cytochrome P450 monooxygenase; part of the gene cluster that mediates the biosynthesis of sordarin and hypoxysordarin, glycoside antibiotics with a unique tetracyclic diterpene aglycone structure. First, the geranylgeranyl diphosphate synthase sdnC constructs GGDP from farnesyl diphosphate and isopentenyl diphosphate. The diterpene cyclase sdnA then catalyzes the cyclization of GGDP to afford cycloaraneosene. Cycloaraneosene is then hydroxylated four times by the putative cytochrome P450 monooxygenases sdnB, sdnE, sdnF and sdnH to give a hydroxylated cycloaraneosene derivative such as cycloaraneosene-8,9,13,19-tetraol. Although the order of the hydroxylations is unclear, at least C8, C9 and C13 of the cycloaraneosene skeleton are hydroxylated before the sordaricin formation. Dehydration of the 13-hydroxy group of the hydroxylated cycloaraneosene derivative might be catalyzed by an unassigned hypothetical protein such as sdnG and sdnP to construct the cyclopentadiene moiety. The FAD-dependent oxidoreductase sdnN is proposed to catalyze the oxidation at C9 of the hydroxylated cycloaraneosene derivative and also catalyze the Baeyer-Villiger oxidation to give the lactone intermediate. The presumed lactone intermediate would be hydrolyzed to give an acrolein moiety and a carboxylate moiety. Then, [4+2]cycloaddition would occur between the acrolein moiety and the cyclopentadiene moiety to give sordaricin. SdnN might also be involved in the [4+2]cycloaddition after the hypothesized oxidation to accommodate the oxidized product and prompt the [4+2]cycloaddition. GDP-6-deoxy-D-altrose may be biosynthesized from GDP-D-mannose by the putative GDP-mannose-4,6-dehydratase sdnI and the short-chain dehydrogenase sdnK. The glycosyltransferase sdnJ catalyzes the attachment of 6-deoxy-D-altrose onto the 19-hydroxy group of sordaricin to give 4'-O-demethylsordarin. The methyltransferase sdnD would complete the biosynthesis of sordarin. Sordarin can be further modified into hypoxysordarin. The unique acyl chain at the 3'-hydroxy group of hypoxysordarin would be constructed by an iterative type I PKS sdnO and the trans-acting polyketide methyltransferase sdnL. SdnL would be responsible for the introduction of an alpha-methyl group of the polyketide chain. Alternatively, the beta-lactamase-like protein sdnR might be responsible for the cleavage and transfer of the polyketide chain from the PKS sdnO to sordarin. Two putative cytochrome P450 monooxygenases, sdnQ and sdnT, might catalyze the epoxidations of the polyketide chain to complete the biosynthesis of hypoxysordarin. Transcriptional regulators sdnM and sdnS are presumably encoded for the transcriptional regulation of the expression of the sdn gene cluster. The sequence is that of Cytochrome P450 monooxygenase sdnH from Sordaria araneosa (Pleurage araneosa).